We begin with the raw amino-acid sequence, 53 residues long: EDLQGDAVPETSATKDDNEXPEMIPMSLPPELEINKPFILIIYDDNTKSPLFV.

Residues 1 to 28 are disordered; that stretch reads EDLQGDAVPETSATKDDNEXPEMIPMSL.

The protein belongs to the serpin family. N-glycosylated; contains biantennary glycans. In terms of tissue distribution, plasma.

The protein localises to the secreted. This Equus caballus (Horse) protein is Alpha-1-antiproteinase 1.